The chain runs to 381 residues: MEVISTNTNGSTIFKNGAIPMNGYQNGTSKHQNGHQNGTSEHRNGHQNGISEHQNGHQNGTSEHQNGHQNGTISHDNGNELQLLGSSNSIKPGWFSEFSALWPGEAFSLKVEKLLFQGKSDYQDVMLFESATYGKVLTLDGAIQHTENGGFPYTEMIVHLPLGSIPNPKKVLIIGGGIGFTLFEMLRYPTIEKIDIVEIDDVVVDVSRKFFPYLAANFSDPRVTLVLGDGAAFVKAAQAGYYDAIIVDSSDPIGPAKDLFERPFFEAVAKALRPGGVVCTQAESIWLHMHIIKQIIANCRQVFKGSVNYAWTTVPTYPTGVIGYMLCSTEGPEVDFKNPVNPIDKETTQVKSKLAPLKFYNSDIHKAAFILPSFARSMIES.

A disordered region spans residues 21 to 81; the sequence is MNGYQNGTSK…TISHDNGNEL (61 aa). 2 stretches are compositionally biased toward polar residues: residues 23–39 and 46–81; these read GYQN…QNGT and HQNG…GNEL. Positions 92–329 constitute a PABS domain; sequence PGWFSEFSAL…GVIGYMLCST (238 aa). S-adenosyl-L-methionine contacts are provided by residues glutamine 123, glutamate 198, and 229 to 230; that span reads DG. The Proton acceptor role is filled by aspartate 248. Tyrosine 317 provides a ligand contact to S-adenosyl-L-methionine.

This sequence belongs to the class I-like SAM-binding methyltransferase superfamily. Putrescine methyltransferase family. As to expression, predominantly expressed in roots.

It carries out the reaction putrescine + S-adenosyl-L-methionine = N-methylputrescine + S-adenosyl-L-homocysteine + H(+). It functions in the pathway alkaloid biosynthesis; nicotine biosynthesis. Involved in the biosynthesis of pyridine alkaloid natural products, leading mainly to the production of anabasine, anatabine, nicotine and nornicotine, effective deterrents against herbivores with antiparasitic and pesticide properties (neurotoxins); nornicotine serves as the precursor in the synthesis of the carcinogen compound N'-nitrosonornicotine (NNN). Methyltransferase that mediates the conversion of putrescine to N-methylputrescine. Promotes leaves ripening. The chain is Putrescine N-methyltransferase 3 from Nicotiana tabacum (Common tobacco).